A 747-amino-acid chain; its full sequence is AMP deaminase 1 (747 aa).

Thr-81 bears the Phosphothreonine mark. At Ser-85 the chain carries Phosphoserine. Tyr-216 bears the Phosphotyrosine mark. 2 residues coordinate Zn(2+): His-303 and His-305. Residues His-305 and 374 to 379 (KFNDKY) each bind substrate. Residue Ser-441 is modified to Phosphoserine. Residue His-572 coordinates Zn(2+). Glu-575 contacts substrate. Catalysis depends on His-594, which acts as the Proton acceptor. Residue Asp-649 participates in Zn(2+) binding. Residue 650-653 (DPMQ) participates in substrate binding.

Belongs to the metallo-dependent hydrolases superfamily. Adenosine and AMP deaminases family. As to quaternary structure, homotetramer. Requires Zn(2+) as cofactor.

The catalysed reaction is AMP + H2O + H(+) = IMP + NH4(+). It participates in purine metabolism; IMP biosynthesis via salvage pathway; IMP from AMP: step 1/1. AMP deaminase plays a critical role in energy metabolism. This is AMP deaminase 1 from Rattus norvegicus (Rat).